The sequence spans 318 residues: Elongator complex protein 5 (318 aa).

A Phosphoserine modification is found at Ser270.

Belongs to the ELP5 family. As to quaternary structure, component of the elongator complex which consists of ELP1, ELP2, ELP3, ELP4, ELP5 and ELP6; in the complex, is required for optimal binding of ELP3 to ELP4. Tyrosine-phosphorylated.

The protein resides in the nucleus. Its subcellular location is the cytoplasm. The protein operates within tRNA modification; 5-methoxycarbonylmethyl-2-thiouridine-tRNA biosynthesis. Functionally, component of the elongator complex which is required for multiple tRNA modifications, including mcm5U (5-methoxycarbonylmethyl uridine), mcm5s2U (5-methoxycarbonylmethyl-2-thiouridine), and ncm5U (5-carbamoylmethyl uridine). The elongator complex catalyzes the formation of carboxymethyluridine in the wobble base at position 34 in tRNAs. Involved in cell migration. This chain is Elongator complex protein 5 (Elp5), found in Rattus norvegicus (Rat).